A 320-amino-acid polypeptide reads, in one-letter code: Lipoyl synthase (320 aa).

[4Fe-4S] cluster is bound by residues C56, C61, C67, C82, C86, C89, and S295. The Radical SAM core domain maps to 68–284 (WNRRTATFMI…REEALKRGFA (217 aa)). A disordered region spans residues 300 to 320 (EQSAQAVARRTGAGRAAQTGD). Positions 303 to 320 (AQAVARRTGAGRAAQTGD) are enriched in low complexity.

This sequence belongs to the radical SAM superfamily. Lipoyl synthase family. [4Fe-4S] cluster is required as a cofactor.

It is found in the cytoplasm. The enzyme catalyses [[Fe-S] cluster scaffold protein carrying a second [4Fe-4S](2+) cluster] + N(6)-octanoyl-L-lysyl-[protein] + 2 oxidized [2Fe-2S]-[ferredoxin] + 2 S-adenosyl-L-methionine + 4 H(+) = [[Fe-S] cluster scaffold protein] + N(6)-[(R)-dihydrolipoyl]-L-lysyl-[protein] + 4 Fe(3+) + 2 hydrogen sulfide + 2 5'-deoxyadenosine + 2 L-methionine + 2 reduced [2Fe-2S]-[ferredoxin]. The protein operates within protein modification; protein lipoylation via endogenous pathway; protein N(6)-(lipoyl)lysine from octanoyl-[acyl-carrier-protein]: step 2/2. Functionally, catalyzes the radical-mediated insertion of two sulfur atoms into the C-6 and C-8 positions of the octanoyl moiety bound to the lipoyl domains of lipoate-dependent enzymes, thereby converting the octanoylated domains into lipoylated derivatives. The polypeptide is Lipoyl synthase (Symbiobacterium thermophilum (strain DSM 24528 / JCM 14929 / IAM 14863 / T)).